We begin with the raw amino-acid sequence, 506 residues long: Nostrin (506 aa).

The F-BAR domain maps to 1 to 260 (MRDPLTDCPY…AISKIDIEKD (260 aa)). S114 carries the phosphoserine modification. Residues 160–222 (SMTEKEKRKL…LELEKERIQL (63 aa)) are a coiled coil. Residues 292 to 372 (AMDKERRKSL…SYKLSSMLAE (81 aa)) enclose the REM-1 domain. The SH3 domain maps to 438–497 (LSSRLCKALYSFQARQDDELNLEKGDIVIIHEKKEGGWWFGSLNGKKGHFPAAYVEELPS). The residue at position 479 (S479) is a Phosphoserine.

Homotrimer. Interacts with DAB2. Interacts with NOS3, DNM2, WASL and CAV1. Interacts (via SH3 domain) with DNM2; this interaction allows the recruitment of NOS3 to dynamin-positive structures. Expressed at highest levels in heart, kidney, placenta and lung, and at lowest levels in brain, thymus and spleen. Present in vascular endothelial cells and placenta. Over-expressed in placenta from women with pre-eclampsia (at protein level).

Its subcellular location is the cell membrane. It is found in the cytoplasmic vesicle. It localises to the cytoplasm. The protein localises to the cytoskeleton. The protein resides in the nucleus. Its function is as follows. Multivalent adapter protein which may decrease NOS3 activity by inducing its translocation away from the plasma membrane. This Homo sapiens (Human) protein is Nostrin.